The following is an 872-amino-acid chain: Metabotropic glutamate receptor 2 (872 aa).

Residues 1–18 (MESLLRFLALLLLRGAVA) form the signal peptide. The Extracellular portion of the chain corresponds to 19 to 568 (EGPAKKVLTL…EYIRWGDAWA (550 aa)). A disulfide bridge links Cys50 with Cys92. Arg57, Arg61, Ser145, Ala166, and Thr168 together coordinate L-glutamate. 2 N-linked (GlcNAc...) asparagine glycosylation sites follow: Asn203 and Asn286. 7 disulfides stabilise this stretch: Cys234/Cys518, Cys355/Cys362, Cys400/Cys407, Cys500/Cys519, Cys504/Cys522, Cys525/Cys537, and Cys540/Cys553. Asp295 contacts L-glutamate. Residue Asn338 is glycosylated (N-linked (GlcNAc...) asparagine). Lys377 is an L-glutamate binding site. Asn402 carries an N-linked (GlcNAc...) asparagine glycan. Asn547 carries N-linked (GlcNAc...) asparagine glycosylation. The helical transmembrane segment at 569–589 (VGPVTIACLGALATLFVLGVF) threads the bilayer. The Cytoplasmic segment spans residues 590-604 (VRHNATPVVKASGRE). Residues 605–625 (LCYILLGGVFLCYCMTFIFIA) form a helical membrane-spanning segment. Residues 626 to 633 (KPSTAVCT) are Extracellular-facing. A disulfide bridge links Cys632 with Cys721. A helical membrane pass occupies residues 634–651 (LRRLGLGTAFSVCYSALL). Over 652-679 (TKTNRIARIFGGAREGAQRPRFISPASQ) the chain is Cytoplasmic. Positions 677 to 685 (ASQVAICLA) are important for interaction with HTR2A. The helical transmembrane segment at 680–700 (VAICLALISGQLLIVAAWLVV) threads the bilayer. Topologically, residues 701–726 (EAPGIGKETAPERREVVTLRCNHRDA) are extracellular. The helical transmembrane segment at 727–747 (SMLGSLAYNVLLIALCTLYAF) threads the bilayer. Over 748–760 (KTRKCPENFNEAK) the chain is Cytoplasmic. Residues 761-781 (FIGFTMYTTCIIWLAFLPIFY) form a helical membrane-spanning segment. Topologically, residues 782–798 (VTSSDYRVQTTTMCVSV) are extracellular. Residues 799 to 819 (SLSGSVVLGCLFAPKLHIILF) form a helical membrane-spanning segment. The Cytoplasmic portion of the chain corresponds to 820–872 (QPQKNVVSHRAPTSRFGSAAPRASANLGQGSGSQLVPTVCNGREVVDSTTSSL).

The protein belongs to the G-protein coupled receptor 3 family. As to quaternary structure, forms heterodimers with GRM3 or GRM4. Interacts with GNAI1. Interacts with TAMALIN. Interacts with HTR2A. In terms of tissue distribution, detected in neurons in brain cortex (at protein level).

The protein localises to the cell membrane. The protein resides in the synapse. Its subcellular location is the cell projection. It is found in the dendrite. In terms of biological role, dimeric G protein-coupled receptor which is activated by the excitatory neurotransmitter L-glutamate. Plays critical roles in modulating synaptic transmission and neuronal excitability. Upon activation by glutamate, inhibits presynaptic calcium channels, reducing further glutamate release and dampening excitatory signaling. Mechanistically, ligand binding causes a conformation change that triggers signaling via guanine nucleotide-binding proteins (G proteins) and modulates the activity of down-stream effectors, such as adenylate cyclase. May mediate suppression of neurotransmission or may be involved in synaptogenesis or synaptic stabilization. This Mus musculus (Mouse) protein is Metabotropic glutamate receptor 2 (Grm2).